The following is a 67-amino-acid chain: Large ribosomal subunit protein bL32 (67 aa).

The interval 1–44 (MAVQQNRKSPSKRDMRRSHDALGFSTLSTDSKSGERHRRHHVTK) is disordered. Positions 11–20 (SKRDMRRSHD) are enriched in basic and acidic residues.

Belongs to the bacterial ribosomal protein bL32 family.

This Dichelobacter nodosus (strain VCS1703A) protein is Large ribosomal subunit protein bL32.